Here is a 429-residue protein sequence, read N- to C-terminus: Glycine betaine monooxygenase oxygenase subunit (429 aa).

Positions 56–163 constitute a Rieske domain; that stretch reads WLIAGMTCEI…VKTAGGYIFI (108 aa). Positions 98, 100, 118, and 121 each coordinate [2Fe-2S] cluster. Positions 217 and 222 each coordinate Fe cation.

Belongs to the bacterial ring-hydroxylating dioxygenase alpha subunit family. As to quaternary structure, the system is composed of an oxygenase subunit (GbcA) and a reductase subunit (GbcB). [2Fe-2S] cluster is required as a cofactor. The cofactor is Fe cation.

It catalyses the reaction glycine betaine + NADH + O2 + H(+) = N,N-dimethylglycine + formaldehyde + NAD(+) + H2O. Functionally, involved in degradation of glycine betaine. Part of a Rieske-type oxygenase system that catalyzes the conversion of glycine betaine (GB) to dimethylglycine (DMG). This subunit is the terminal oxygenase component of the system. This Pseudomonas aeruginosa (strain UCBPP-PA14) protein is Glycine betaine monooxygenase oxygenase subunit.